The sequence spans 418 residues: Serine hydroxymethyltransferase (418 aa).

Residues L121 and 125–127 each bind (6S)-5,6,7,8-tetrahydrofolate; that span reads GHL. The residue at position 230 (K230) is an N6-(pyridoxal phosphate)lysine. 356 to 358 lines the (6S)-5,6,7,8-tetrahydrofolate pocket; it reads SPF.

Belongs to the SHMT family. In terms of assembly, homodimer. The cofactor is pyridoxal 5'-phosphate.

It localises to the cytoplasm. The enzyme catalyses (6R)-5,10-methylene-5,6,7,8-tetrahydrofolate + glycine + H2O = (6S)-5,6,7,8-tetrahydrofolate + L-serine. The protein operates within one-carbon metabolism; tetrahydrofolate interconversion. It functions in the pathway amino-acid biosynthesis; glycine biosynthesis; glycine from L-serine: step 1/1. Functionally, catalyzes the reversible interconversion of serine and glycine with tetrahydrofolate (THF) serving as the one-carbon carrier. This reaction serves as the major source of one-carbon groups required for the biosynthesis of purines, thymidylate, methionine, and other important biomolecules. Also exhibits THF-independent aldolase activity toward beta-hydroxyamino acids, producing glycine and aldehydes, via a retro-aldol mechanism. The polypeptide is Serine hydroxymethyltransferase (Shewanella pealeana (strain ATCC 700345 / ANG-SQ1)).